Here is a 400-residue protein sequence, read N- to C-terminus: PHD finger protein 24 (400 aa).

G2 carries the N-myristoyl glycine lipid modification. The interval 30–108 (DRPSIRRTGE…FTPPAFIRPT (79 aa)) is disordered. R36 is subject to Omega-N-methylarginine. S43 is subject to Phosphoserine. Phosphothreonine is present on T47. S51 bears the Phosphoserine mark. Residues 78 to 97 (AWERLRDGRGVEPEEFDRTG) are compositionally biased toward basic and acidic residues. The segment at 129 to 190 (NDEMCDVCEV…TGWSCHYCDN (62 aa)) adopts a PHD-type zinc-finger fold.

This Pongo abelii (Sumatran orangutan) protein is PHD finger protein 24.